The chain runs to 159 residues: Protein UXT homolog (159 aa).

Belongs to the UXT family.

The sequence is that of Protein UXT homolog from Nematostella vectensis (Starlet sea anemone).